Consider the following 183-residue polypeptide: ATP-dependent protease subunit HslV (183 aa).

Residue Thr10 is part of the active site. Ala164, Cys167, and Thr170 together coordinate Na(+).

The protein belongs to the peptidase T1B family. HslV subfamily. A double ring-shaped homohexamer of HslV is capped on each side by a ring-shaped HslU homohexamer. The assembly of the HslU/HslV complex is dependent on binding of ATP.

Its subcellular location is the cytoplasm. The enzyme catalyses ATP-dependent cleavage of peptide bonds with broad specificity.. Allosterically activated by HslU binding. Functionally, protease subunit of a proteasome-like degradation complex believed to be a general protein degrading machinery. The protein is ATP-dependent protease subunit HslV of Rhizorhabdus wittichii (strain DSM 6014 / CCUG 31198 / JCM 15750 / NBRC 105917 / EY 4224 / RW1) (Sphingomonas wittichii).